A 324-amino-acid polypeptide reads, in one-letter code: E3 ubiquitin-protein ligase SIAH2 (324 aa).

The segment covering 1-15 (MSRPSSTGPSANKPC) has biased composition (polar residues). A disordered region spans residues 1-42 (MSRPSSTGPSANKPCSKQPPPQPQHTPSPAAPPAAATISAAG). Phosphoserine is present on serine 6. Serine 16 bears the Phosphoserine; by DYRK2 mark. A compositionally biased stretch (pro residues) spans 17-32 (KQPPPQPQHTPSPAAP). Position 26 is a phosphothreonine; by DYRK2 (threonine 26). A Phosphoserine; by DYRK2 and MAPK14 modification is found at serine 28. The segment covering 33-42 (PAAATISAAG) has biased composition (low complexity). Serine 68 bears the Phosphoserine; by DYRK2 mark. The segment at 80 to 115 (CPVCFDYVLPPILQCQAGHLVCNQCRQKLSCCPTCR) adopts an RING-type zinc-finger fold. Residue threonine 119 is modified to Phosphothreonine; by DYRK2. Residues 130–322 (VASAVLFPCK…LGINVTISTC (193 aa)) form an SBD region. The SIAH-type zinc finger occupies 133–193 (AVLFPCKYAT…VMSHLMHAHK (61 aa)). Cysteine 138, cysteine 145, histidine 157, cysteine 161, cysteine 168, cysteine 175, histidine 187, and histidine 192 together coordinate Zn(2+).

The protein belongs to the SINA (Seven in absentia) family. Homodimer. Interacts with UBE2E2. Interacts with PEG3. Interacts with VAV1, without mediating its ubiquitin-mediated degradation. Interacts with CACYBP/SIP. Probable component of some large E3 complex possibly composed of UBE2D1, SIAH2, CACYBP/SIP, SKP1, APC and TBL1X. Interacts with PEG10, which may inhibit its activity. Interacts with EGLN2 and SNCAIP. Interacts with DYRK2. Interacts with NR1D1 and NR1D2. Interacts with DCC. Interacts with AXIN1. In terms of processing, phosphorylated at Ser-28 by MAPK14, which mediates the degradation by the proteasome of EGLN3. Phosphorylated at Ser-28 by DYRK2; this increases the ubiquitin ligase activity and promotes degradation of EGLN3. As to expression, widely expressed at low level.

It localises to the cytoplasm. The protein localises to the nucleus. The enzyme catalyses S-ubiquitinyl-[E2 ubiquitin-conjugating enzyme]-L-cysteine + [acceptor protein]-L-lysine = [E2 ubiquitin-conjugating enzyme]-L-cysteine + N(6)-ubiquitinyl-[acceptor protein]-L-lysine.. It functions in the pathway protein modification; protein ubiquitination. With respect to regulation, inhibited by interaction with SNCAIP (isoform 2, but not isoform 1). May be inhibited by interaction with PEG10. Functionally, E3 ubiquitin-protein ligase that mediates ubiquitination and subsequent proteasomal degradation of target proteins. E3 ubiquitin ligases accept ubiquitin from an E2 ubiquitin-conjugating enzyme in the form of a thioester and then directly transfers the ubiquitin to targeted substrates. Mediates E3 ubiquitin ligase activity either through direct binding to substrates or by functioning as the essential RING domain subunit of larger E3 complexes. Triggers the ubiquitin-mediated degradation of many substrates, including proteins involved in transcription regulation (GPS2, POU2AF1, PML, NCOR1), a cell surface receptor (DCC), an antiapoptotic protein (BAG1), and a protein involved in synaptic vesicle function in neurons (SYP). Mediates ubiquitination and proteasomal degradation of DYRK2 in response to hypoxia. It is thereby involved in apoptosis, tumor suppression, cell cycle, transcription and signaling processes. Has some overlapping function with SIAH1. Triggers the ubiquitin-mediated degradation of TRAF2, whereas SIAH1 does not. Promotes monoubiquitination of SNCA. Regulates cellular clock function via ubiquitination of the circadian transcriptional repressors NR1D1 and NR1D2 leading to their proteasomal degradation. Plays an important role in mediating the rhythmic degradation/clearance of NR1D1 and NR1D2 contributing to their circadian profile of protein abundance. Mediates ubiquitination and degradation of EGLN2 and EGLN3 in response to the unfolded protein response (UPR), leading to their degradation and subsequent stabilization of ATF4. Also part of the Wnt signaling pathway in which it mediates the Wnt-induced ubiquitin-mediated proteasomal degradation of AXIN1. The sequence is that of E3 ubiquitin-protein ligase SIAH2 (SIAH2) from Homo sapiens (Human).